Reading from the N-terminus, the 59-residue chain is Large ribosomal subunit protein bL32 (59 aa).

The disordered stretch occupies residues 1–34; it reads MAVQKSKVTRSRRGQRRSHDALTGPTLSVDKTTG. Residues 7 to 16 are compositionally biased toward basic residues; it reads KVTRSRRGQR.

Belongs to the bacterial ribosomal protein bL32 family.

This chain is Large ribosomal subunit protein bL32, found in Marinomonas sp. (strain MWYL1).